The following is a 468-amino-acid chain: Nicotinamide phosphoribosyltransferase (468 aa).

Position 180 (R180) interacts with diphosphate. D203 serves as a coordination point for beta-nicotinamide D-ribonucleotide. H229 and R293 together coordinate diphosphate. Phosphohistidine; by autocatalysis is present on H229. 2 residues coordinate beta-nicotinamide D-ribonucleotide: D335 and R373.

It belongs to the NAPRTase family. Homodimer. The dimeric structure consists of two protomers arranged head to tail, with domain A on one protomer interacting with domain B on the other protomer. Post-translationally, phosphorylation at His-229 plays a crucial role in enhancing the substrate affinity and is important for maintaining enzymatic activity.

The catalysed reaction is beta-nicotinamide D-ribonucleotide + diphosphate = 5-phospho-alpha-D-ribose 1-diphosphate + nicotinamide + H(+). It participates in cofactor biosynthesis; NAD(+) biosynthesis; nicotinamide D-ribonucleotide from 5-phospho-alpha-D-ribose 1-diphosphate and nicotinamide: step 1/1. ATP-dependent autophosphorylation plays a vital role in nicotinamide binding and enzyme activation. Activity is inhibited by FK866. Functionally, catalyzes the condensation of nicotinamide with 5-phosphoribosyl-1-pyrophosphate to yield nicotinamide mononucleotide, an intermediate in the biosynthesis of NAD. Plays an important role in the biosynthesis of NAD via the nicotinamide (NAM) salvage pathway. Is also capable of hydrolyzing ATP and shows ATP-dependent autophosphorylation activity. The sequence is that of Nicotinamide phosphoribosyltransferase from Xanthomonas campestris pv. campestris (strain 8004).